Reading from the N-terminus, the 307-residue chain is Fe-S cluster assembly protein dre2 (307 aa).

Disordered stretches follow at residues 1–26 (MTPV…PSTS) and 159–179 (KKKK…VGFV). A compositionally biased stretch (low complexity) spans 15–26 (AAPPTKTAPSTS). The interval 23–152 (PSTSTRTLLL…EKPAYQEAAV (130 aa)) is N-terminal SAM-like domain. The interval 153–197 (PLRLGGKKKKAPAPTEQPPVATGVGFVDGNDELIDEDDLLSDDDL) is linker. Residues C207, C219, C222, and C224 each coordinate [2Fe-2S] cluster. The tract at residues 207 to 224 (CQPEKAKKRRRPCKDCTC) is fe-S binding site A. The [4Fe-4S] cluster site is built by C270, C273, C281, and C284. Short sequence motifs (cx2C motif) lie at residues 270-273 (CNSC) and 281-284 (CSSC). The fe-S binding site B stretch occupies residues 270–284 (CNSCSLGDAFRCSSC).

It belongs to the anamorsin family. In terms of assembly, monomer. Interacts with tah18. Interacts with mia40. [2Fe-2S] cluster serves as cofactor. The cofactor is [4Fe-4S] cluster.

The protein resides in the cytoplasm. The protein localises to the mitochondrion intermembrane space. Its function is as follows. Component of the cytosolic iron-sulfur (Fe-S) protein assembly (CIA) machinery required for the maturation of extramitochondrial Fe-S proteins. Part of an electron transfer chain functioning in an early step of cytosolic Fe-S biogenesis, facilitating the de novo assembly of a [4Fe-4S] cluster on the scaffold complex cfd1-nbp35. Electrons are transferred to dre2 from NADPH via the FAD- and FMN-containing protein tah18. Tah18-dre2 are also required for the assembly of the diferric tyrosyl radical cofactor of ribonucleotide reductase (RNR), probably by providing electrons for reduction during radical cofactor maturation in the catalytic small subunit rnr2. This is Fe-S cluster assembly protein dre2 from Aspergillus terreus (strain NIH 2624 / FGSC A1156).